We begin with the raw amino-acid sequence, 1172 residues long: MVSGVGGSGGGRGGGRGGEEEPSSSHTPNNRRGGEQAQSSGTKSLRPRSNTESMSKAIQQYTVDARLHAVFEQSGESGKSFDYSQSLKTTTYGSSVPEQQITAYLSRIQRGGYIQPFGCMIAVDESSFRIIGYSENAREMLGIMPQSVPTLEKPEILAMGTDVRSLFTSSSSILLERAFVAREITLLNPVWIHSKNTGKPFYAILHRIDVGVVIDLEPARTEDPALSIAGAVQSQKLAVRAISQLQALPGGDIKLLCDTVVESVRDLTGYDRVMVYKFHEDEHGEVVAESKRDDLEPYIGLHYPATDIPQASRFLFKQNRVRMIVDCNATPVLVVQDDRLTQSMCLVGSTLRAPHGCHSQYMANMGSIASLAMAVIINGNEDDGSNVASGRSSMRLWGLVVCHHTSSRCIPFPLRYACEFLMQAFGLQLNMELQLALQMSEKRVLRTQTLLCDMLLRDSPAGIVTQSPSIMDLVKCDGAAFLYHGKYYPLGVAPSEVQIKDVVEWLLANHADSTGLSTDSLGDAGYPGAAALGDAVCGMAVAYITKRDFLFWFRSHTAKEIKWGGAKHHPEDKDDGQRMHPRSSFQAFLEVVKSRSQPWETAEMDAIHSLQLILRDSFKESEAAMNSKVVDGVVQPCRDMAGEQGIDELGAVAREMVRLIETATVPIFAVDAGGCINGWNAKIAELTGLSVEEAMGKSLVSDLIYKENEATVNKLLSRALRGDEEKNVEVKLKTFSPELQGKAVFVVVNACSSKDYLNNIVGVCFVGQDVTSQKIVMDKFINIQGDYKAIVHSPNPLIPPIFAADENTCCLEWNMAMEKLTGWSRSEVIGKMIVGEVFGSCCMLKGPDALTKFMIVLHNAIGGQDTDKFPFPFFDRNGKFVQALLTANKRVSLEGKVIGAFCFLQIPSPELQQALAVQRRQDTECFTKAKELAYICQVIKNPLSGMRFANSLLEATDLNEDQKQLLETSVSCEKQISRIVGDMDLESIEDGSFVLKREEFFLGSVINAIVSQAMFLLRDRGLQLIRDIPEEIKSIEVFGDQIRIQQLLAEFLLSIIRYAPSQEWVEIHLSQLSKQMADGFAAIRTEFRMACPGEGLPPELVRDMFHSSRWTSPEGLGLSVCRKILKLMNGEVQYIRESERSYFLIILELPVPRKRPLSTASGSGDMMLMMPY.

Residues 1–16 (MVSGVGGSGGGRGGGR) are compositionally biased toward gly residues. Residues 1 to 54 (MVSGVGGSGGGRGGGRGGEEEPSSSHTPNNRRGGEQAQSSGTKSLRPRSNTESM) form a disordered region. Over residues 24–54 (SSHTPNNRRGGEQAQSSGTKSLRPRSNTESM) the composition is skewed to polar residues. In terms of domain architecture, GAF spans 252 to 433 (DIKLLCDTVV…AFGLQLNMEL (182 aa)). Residue Cys-357 participates in phytochromobilin binding. 2 PAS domains span residues 652–723 (VARE…LRGD) and 786–857 (DYKA…MIVL). Positions 934-1153 (YICQVIKNPL…LIILELPVPR (220 aa)) constitute a Histidine kinase domain.

The protein belongs to the phytochrome family. In terms of assembly, homodimer. Interacts with ADO1 and PKS4. Stabilized by interactions with PAPP5 and FYPP3 which are enhanced in the phosphorylated Pfr form. Interacts with VOZ1 and VOZ2. Binds, via its photosensory domain, to PTAC12/HMR/PAP5 when photoactivated; this interaction stimulates its localization to photobodies. Interacts with CRY1 specifically when in the dark/far-red (Pr) state, but not when red light-activated (Pfr). Interacts with PIF4 and PIF5 in response to low blue light (LBL). Component of a red light-dependent nuclear complex made of PHL, PHYB and CO. Interacts directly with PHL. Binds to UNE10/PIF8 when red light-activated (Pfr). When light-activated, interacts with PCH1 and PCHL. Associated with DRT111/RSN2/SFPS, SMP2 and SWAP1 in nuclear photobodies upon response to red light (Pfr form). Contains one covalently linked phytochromobilin chromophore. Expressed in fruits, flowers, leaves, stems, seedlings and roots.

The protein resides in the cytoplasm. It is found in the nucleus. Its subcellular location is the nucleoplasm. The protein localises to the nucleus speckle. Regulatory photoreceptor which exists in two forms that are reversibly interconvertible by light: the Pr form that absorbs maximally in the red region of the spectrum and the Pfr form that absorbs maximally in the far-red region. Photoconversion of Pr to Pfr induces an array of morphogenetic responses, whereas reconversion of Pfr to Pr cancels the induction of those responses. Pfr controls the expression of a number of nuclear genes including those encoding the small subunit of ribulose-bisphosphate carboxylase, chlorophyll A/B binding protein, protochlorophyllide reductase, rRNA, etc. It also controls the expression of its own gene(s) in a negative feedback fashion. Involved in the flowering time regulation. Involved in light-regulated circadian phase control that triggers stomatal aperture, stomatal conductance, and CO(2) assimilation. Implicated in red light perception, and, to a lower extent, in blue light signaling. Controls thermomorphogenesis in the daytime and regulates temperature responses by associating with the promoters of key target genes in a temperature-dependent manner and subsequently repressing their expression in a PIF4-dependent manner (temperature-responsive transcriptional regulator); this process requires PTAC12/HMR/PAP5 (transcriptional activator). Thermal timer that integrates temperature information over the course of the night. Detabilizes UNE10/PIF8 in red light. In Arabidopsis thaliana (Mouse-ear cress), this protein is Phytochrome B.